A 284-amino-acid polypeptide reads, in one-letter code: Homoserine O-acetyltransferase 2 (284 aa).

The active-site Acyl-thioester intermediate is the Cys-133. Substrate contacts are provided by Lys-154 and Ser-178. His-220 (proton acceptor) is an active-site residue. Glu-222 is a catalytic residue. Arg-234 is a substrate binding site.

The protein belongs to the MetA family.

The protein localises to the cytoplasm. The catalysed reaction is L-homoserine + acetyl-CoA = O-acetyl-L-homoserine + CoA. Its pathway is amino-acid biosynthesis; L-methionine biosynthesis via de novo pathway; O-acetyl-L-homoserine from L-homoserine: step 1/1. Transfers an acetyl group from acetyl-CoA to L-homoserine, forming acetyl-L-homoserine. This chain is Homoserine O-acetyltransferase 2, found in Ilyobacter polytropus (strain ATCC 51220 / DSM 2926 / LMG 16218 / CuHBu1).